Here is a 200-residue protein sequence, read N- to C-terminus: Probable GTP-binding protein EngB (200 aa).

Residues 22–197 (NLPEYAFIGR…LDYIDSINRS (176 aa)) enclose the EngB-type G domain. Residues 30–37 (GRSNVGKS), 57–61 (GKTLL), 75–78 (DLPG), 142–145 (TKAD), and 173–178 (HFVSSS) each bind GTP. Residues S37 and T59 each coordinate Mg(2+).

It belongs to the TRAFAC class TrmE-Era-EngA-EngB-Septin-like GTPase superfamily. EngB GTPase family. Requires Mg(2+) as cofactor.

Its function is as follows. Necessary for normal cell division and for the maintenance of normal septation. The sequence is that of Probable GTP-binding protein EngB from Phocaeicola vulgatus (strain ATCC 8482 / DSM 1447 / JCM 5826 / CCUG 4940 / NBRC 14291 / NCTC 11154) (Bacteroides vulgatus).